Here is a 74-residue protein sequence, read N- to C-terminus: Small ribosomal subunit protein uS15 (74 aa).

Belongs to the universal ribosomal protein uS15 family. In terms of assembly, part of the 30S ribosomal subunit. Forms a bridge to the 50S subunit in the 70S ribosome, contacting the 23S rRNA.

One of the primary rRNA binding proteins, it binds directly to 16S rRNA where it helps nucleate assembly of the platform of the 30S subunit by binding and bridging several RNA helices of the 16S rRNA. Functionally, forms an intersubunit bridge (bridge B4) with the 23S rRNA of the 50S subunit in the ribosome. In Onion yellows phytoplasma (strain OY-M), this protein is Small ribosomal subunit protein uS15.